The chain runs to 425 residues: UPF0597 protein Swoo_4889 (425 aa).

The protein belongs to the UPF0597 family.

The polypeptide is UPF0597 protein Swoo_4889 (Shewanella woodyi (strain ATCC 51908 / MS32)).